A 494-amino-acid polypeptide reads, in one-letter code: Cheilanthifoline synthase (494 aa).

A helical transmembrane segment spans residues 4–24 (TIWLIISTVIIVLGIAKFLLG). Cys-437 provides a ligand contact to heme.

The protein belongs to the cytochrome P450 family. The cofactor is heme. Expressed in roots and at lower levels in stems, leaves and plantlets.

The protein resides in the endoplasmic reticulum membrane. It catalyses the reaction (S)-scoulerine + reduced [NADPH--hemoprotein reductase] + O2 = (S)-cheilanthifoline + oxidized [NADPH--hemoprotein reductase] + 2 H2O + H(+). In terms of biological role, methylenedioxy bridge-forming cytochrome P450 involved in the biosynthesis of isoquinoline alkaloids. Converts (S)-scoulerine into (S)-cheilanthifoline, a precursor of sanguinarine. Catalyzes an oxidative reaction that does not incorporate oxygen into the product. The sequence is that of Cheilanthifoline synthase from Argemone mexicana (Mexican prickly poppy).